Reading from the N-terminus, the 83-residue chain is Exodeoxyribonuclease 7 small subunit (83 aa).

It belongs to the XseB family. Heterooligomer composed of large and small subunits.

The protein resides in the cytoplasm. It catalyses the reaction Exonucleolytic cleavage in either 5'- to 3'- or 3'- to 5'-direction to yield nucleoside 5'-phosphates.. Its function is as follows. Bidirectionally degrades single-stranded DNA into large acid-insoluble oligonucleotides, which are then degraded further into small acid-soluble oligonucleotides. In Rhizobium etli (strain ATCC 51251 / DSM 11541 / JCM 21823 / NBRC 15573 / CFN 42), this protein is Exodeoxyribonuclease 7 small subunit.